The following is a 70-amino-acid chain: Sec-independent protein translocase protein TatA (70 aa).

A helical membrane pass occupies residues 1-21; it reads MFGLGGQELLLILLIILLLFG. The disordered stretch occupies residues 47-70; it reads EDEFNKAMSDPPEKKEKESPSDKG. Residues 57-70 are compositionally biased toward basic and acidic residues; the sequence is PPEKKEKESPSDKG.

This sequence belongs to the TatA/E family. In terms of assembly, forms a complex with TatC.

Its subcellular location is the cell inner membrane. Functionally, part of the twin-arginine translocation (Tat) system that transports large folded proteins containing a characteristic twin-arginine motif in their signal peptide across membranes. TatA could form the protein-conducting channel of the Tat system. The chain is Sec-independent protein translocase protein TatA from Prosthecochloris aestuarii (strain DSM 271 / SK 413).